Reading from the N-terminus, the 218-residue chain is MAGDAVTVVLPCLNEEESLPAVLAAIPAGYRALVVDNNSTDDTATVAARHGAQVVVEPRPGYGSAVHAGVLAATTPIVAVIDADGSMDAGDLPKLVAELDKGADLVTGRRRPVAGLHWPWVARVGTVVMSWRLRTRHRLPVHDIAPMRVARREALLDLGVVDRRSGYPLELLVRAAAAGWRVVELDVSYGPRTGGKSKVSGSLRGSIIAILDFWKVIS.

The protein belongs to the glycosyltransferase 2 family.

This is an uncharacterized protein from Mycobacterium bovis (strain ATCC BAA-935 / AF2122/97).